The following is a 343-amino-acid chain: WAT1-related protein At1g43650 (343 aa).

A run of 10 helical transmembrane segments spans residues methionine 9–isoleucine 29, phenylalanine 36–phenylalanine 56, leucine 65–leucine 85, threonine 98–phenylalanine 118, glycine 130–valine 150, serine 175–methionine 195, leucine 209–asparagine 229, phenylalanine 239–tryptophan 259, phenylalanine 272–phenylalanine 292, and phenylalanine 296–tryptophan 316. EamA domains lie at isoleucine 16–valine 139 and cysteine 188–leucine 313.

Belongs to the drug/metabolite transporter (DMT) superfamily. Plant drug/metabolite exporter (P-DME) (TC 2.A.7.4) family.

Its subcellular location is the membrane. This is WAT1-related protein At1g43650 from Arabidopsis thaliana (Mouse-ear cress).